The sequence spans 283 residues: Glutamate racemase (283 aa).

Residues D28–S29 and Y60–G61 contribute to the substrate site. The active-site Proton donor/acceptor is C92. N93 to T94 serves as a coordination point for substrate. C204 (proton donor/acceptor) is an active-site residue. T205–H206 is a substrate binding site.

The protein belongs to the aspartate/glutamate racemases family.

It catalyses the reaction L-glutamate = D-glutamate. The protein operates within cell wall biogenesis; peptidoglycan biosynthesis. Provides the (R)-glutamate required for cell wall biosynthesis. In Salmonella gallinarum (strain 287/91 / NCTC 13346), this protein is Glutamate racemase.